The following is a 274-amino-acid chain: Nickel/cobalt efflux system RcnA (274 aa).

Topologically, residues 1 to 12 are periplasmic; it reads MTEFTTLLQQGN. Residues 13-33 traverse the membrane as a helical segment; it reads AWFFIPSVILLGALHGLEPGH. Topologically, residues 34-56 are cytoplasmic; that stretch reads SKTMMAAFIIAIKGTIKQAVMLG. Residues 57–77 form a helical membrane-spanning segment; it reads LAATISHTAVVWLIAFGGMVI. The Periplasmic portion of the chain corresponds to 78-86; the sequence is SKRFTAQSA. Residues 87-107 form a helical membrane-spanning segment; it reads EPWLQLISAVIIISTAFWMFW. The Cytoplasmic portion of the chain corresponds to 108–174; sequence RTWRGERNWL…FDGREVTNWQ (67 aa). A disordered region spans residues 127-153; the sequence is HHHHDHEHHHDHGHHHHHEHGEYQDAH. Residues 129–144 show a composition bias toward basic residues; the sequence is HHDHEHHHDHGHHHHH. Residues 175–195 traverse the membrane as a helical segment; that stretch reads ILLFGLTGGLIPCPAAITVLL. Topologically, residues 196 to 209 are periplasmic; sequence ICIQLKALTLGATL. Residues 210–230 form a helical membrane-spanning segment; sequence VVSFSIGLALTLVTVGVGAAI. The Cytoplasmic portion of the chain corresponds to 231–251; the sequence is SVQQVAKRWSGFNTLAKRAPY. A helical membrane pass occupies residues 252–272; sequence FSSLLIGLVGVYMGVHGFMGI. Over 273-274 the chain is Periplasmic; the sequence is MR.

The protein belongs to the NiCoT transporter (TC 2.A.52) family. RcnA subfamily.

It localises to the cell inner membrane. Functionally, efflux system for nickel and cobalt. The polypeptide is Nickel/cobalt efflux system RcnA (rcnA) (Escherichia coli O9:H4 (strain HS)).